We begin with the raw amino-acid sequence, 309 residues long: MPAEGGKTDMERIGLFSEMEYITVGDKYVSQFNRPFNESASKNRQILPGGSKEMSNLQAGYFDPHFVRIFEGESYVNPNQVRRRYMMEEAKKNLSKAFLPSNGEKKPCGLGSYYGTIGGPVPFFSAQSKPKEKYEPPGKNLYTNPGKKGTGYGYANITIGKQFSHSSDLYDAAKLNNKKENEEHRRLLKGTAFKLNLYTREYFDTNPYMSEKPLPPIKKVEKKETVGNPFKPSSPGKKAGGMKAGTFDPYPSHSADPYVVKLKSPSSKSAKVFHPPGGPKSRPIESIMALNVKRALNMKNYKTASVQSY.

The disordered stretch occupies residues T225–P251.

Belongs to the CFAP96 family.

The protein localises to the cytoplasm. It is found in the cytoskeleton. It localises to the microtubule organizing center. Its subcellular location is the centrosome. The protein is Cilia-and flagella-associated protein 96 (CFAP96) of Bos taurus (Bovine).